Reading from the N-terminus, the 225-residue chain is Triosephosphate isomerase (225 aa).

Position 9-11 (9-11 (NMK)) interacts with substrate. Histidine 93 serves as the catalytic Electrophile. Glutamate 141 acts as the Proton acceptor in catalysis. Substrate contacts are provided by residues isoleucine 146, glycine 181, and 202 to 203 (AS).

It belongs to the triosephosphate isomerase family. In terms of assembly, homotetramer; dimer of dimers.

The protein localises to the cytoplasm. It carries out the reaction D-glyceraldehyde 3-phosphate = dihydroxyacetone phosphate. It functions in the pathway carbohydrate biosynthesis; gluconeogenesis. It participates in carbohydrate degradation; glycolysis; D-glyceraldehyde 3-phosphate from glycerone phosphate: step 1/1. Its function is as follows. Involved in the gluconeogenesis. Catalyzes stereospecifically the conversion of dihydroxyacetone phosphate (DHAP) to D-glyceraldehyde-3-phosphate (G3P). This is Triosephosphate isomerase from Caldivirga maquilingensis (strain ATCC 700844 / DSM 13496 / JCM 10307 / IC-167).